An 83-amino-acid polypeptide reads, in one-letter code: MADATEKAEHDRIFKKFDANGDGKISAAELEEALKTLGSVTADDVKRMMAEIDTDGDGNISYQEFTDFAGANRGLMKDVAKIF.

2 consecutive EF-hand domains span residues 5–40 (TEKA…LGSV) and 43–75 (DDVK…NRGL). Residues D18, N20, D22, K24, E29, D53, D55, D57, N59, and E64 each coordinate Ca(2+).

Functionally, potential calcium sensor. In Arabidopsis thaliana (Mouse-ear cress), this protein is Probable calcium-binding protein CML29 (CML29).